Here is a 237-residue protein sequence, read N- to C-terminus: Uridylate kinase (237 aa).

An ATP-binding site is contributed by 11–14; it reads KLSG. Position 53 (glycine 53) interacts with UMP. The ATP site is built by glycine 54 and arginine 58. UMP-binding positions include aspartate 73 and 134 to 141; that span reads TGNPFFTT. Residues threonine 161, tyrosine 167, and aspartate 170 each coordinate ATP.

This sequence belongs to the UMP kinase family. As to quaternary structure, homohexamer.

The protein localises to the cytoplasm. The catalysed reaction is UMP + ATP = UDP + ADP. It functions in the pathway pyrimidine metabolism; CTP biosynthesis via de novo pathway; UDP from UMP (UMPK route): step 1/1. With respect to regulation, inhibited by UTP. Catalyzes the reversible phosphorylation of UMP to UDP. The protein is Uridylate kinase of Burkholderia vietnamiensis (strain G4 / LMG 22486) (Burkholderia cepacia (strain R1808)).